We begin with the raw amino-acid sequence, 220 residues long: Fructose-6-phosphate aldolase 2 (220 aa).

Lysine 85 serves as the catalytic Schiff-base intermediate with substrate.

The protein belongs to the transaldolase family. Type 3A subfamily. As to quaternary structure, homodecamer.

Its subcellular location is the cytoplasm. It catalyses the reaction beta-D-fructose 6-phosphate = dihydroxyacetone + D-glyceraldehyde 3-phosphate. Functionally, catalyzes the reversible formation of fructose 6-phosphate from dihydroxyacetone and D-glyceraldehyde 3-phosphate via an aldolization reaction. The sequence is that of Fructose-6-phosphate aldolase 2 (fsaB) from Escherichia coli O6:H1 (strain CFT073 / ATCC 700928 / UPEC).